The following is a 557-amino-acid chain: ABC1 family protein MCP2 homolog (557 aa).

A mitochondrion-targeting transit peptide spans 1–33; that stretch reads MFSRFSWPRITRCFRSYPKKKSSCISFTHHARE. Residues 34–39 lie on the Mitochondrial matrix side of the membrane; sequence HTNFKK. The helical transmembrane segment at 40–56 threads the bilayer; it reads PAVVGASITLMASVALV. Over 57 to 557 the chain is Mitochondrial intermembrane; the sequence is DFDPVKHAGV…NYFYYKHMYL (501 aa).

The protein belongs to the protein kinase superfamily. ADCK protein kinase family.

The protein resides in the mitochondrion inner membrane. Its function is as follows. Involved in mitochondrial lipid homeostasis. The protein is ABC1 family protein MCP2 homolog of Schizosaccharomyces pombe (strain 972 / ATCC 24843) (Fission yeast).